A 595-amino-acid polypeptide reads, in one-letter code: Proline--tRNA ligase (595 aa).

The tract at residues 1–22 (MKMSTMFGATLHTAPGRSESEG) is disordered.

It belongs to the class-II aminoacyl-tRNA synthetase family. ProS type 1 subfamily. As to quaternary structure, homodimer.

It localises to the cytoplasm. The enzyme catalyses tRNA(Pro) + L-proline + ATP = L-prolyl-tRNA(Pro) + AMP + diphosphate. Functionally, catalyzes the attachment of proline to tRNA(Pro) in a two-step reaction: proline is first activated by ATP to form Pro-AMP and then transferred to the acceptor end of tRNA(Pro). As ProRS can inadvertently accommodate and process non-cognate amino acids such as alanine and cysteine, to avoid such errors it has two additional distinct editing activities against alanine. One activity is designated as 'pretransfer' editing and involves the tRNA(Pro)-independent hydrolysis of activated Ala-AMP. The other activity is designated 'posttransfer' editing and involves deacylation of mischarged Ala-tRNA(Pro). The misacylated Cys-tRNA(Pro) is not edited by ProRS. The sequence is that of Proline--tRNA ligase from Salinispora tropica (strain ATCC BAA-916 / DSM 44818 / JCM 13857 / NBRC 105044 / CNB-440).